The chain runs to 132 residues: Translation initiation factor 5A (132 aa).

Lys-36 carries the hypusine modification.

It belongs to the eIF-5A family.

The protein localises to the cytoplasm. In terms of biological role, functions by promoting the formation of the first peptide bond. This chain is Translation initiation factor 5A (eIF5A), found in Thermofilum pendens (strain DSM 2475 / Hrk 5).